Reading from the N-terminus, the 101-residue chain is Apolipoprotein C-II (101 aa).

Positions Met-1 to Gly-22 are cleaved as a signal peptide. A lipid binding region spans residues Ala-66 to Leu-74. Residues Ser-78 to Glu-101 are lipoprotein lipase cofactor.

The protein belongs to the apolipoprotein C2 family. In terms of processing, proapolipoprotein C-II is synthesized as a sialic acid containing glycoprotein which is subsequently desialylated prior to its proteolytic processing. Post-translationally, proapolipoprotein C-II, the major form found in plasma undergoes proteolytic cleavage of its N-terminal hexapeptide to generate apolipoprotein C-II, which occurs as the minor form in plasma.

It is found in the secreted. Component of chylomicrons, very low-density lipoproteins (VLDL), low-density lipoproteins (LDL), and high-density lipoproteins (HDL) in plasma. Plays an important role in lipoprotein metabolism as an activator of lipoprotein lipase. Both proapolipoprotein C-II and apolipoprotein C-II can activate lipoprotein lipase. In Colobus guereza (Mantled guereza), this protein is Apolipoprotein C-II (APOC2).